Here is a 121-residue protein sequence, read N- to C-terminus: Copper transport protein CCH (121 aa).

Ala2 bears the N-acetylalanine mark. An HMA domain is found at Ala2–Ser65. Cu cation-binding residues include Cys13 and Cys16. Residues Glu70–Val121 form a disordered region. Basic and acidic residues predominate over residues Ala73–Val121.

It belongs to the ATX1 family. It depends on Cu cation as a cofactor. Expressed in phloem (at protein level).

In terms of biological role, involved in copper homeostasis. Can complement the yeast mutants atx1 and sod1. The chain is Copper transport protein CCH (CCH) from Arabidopsis thaliana (Mouse-ear cress).